The primary structure comprises 598 residues: uncharacterized protein (598 aa).

The ABC transmembrane type-1 domain occupies 39 to 322; the sequence is LIMVFVFVTV…LSNQFNMIQM (284 aa). 5 consecutive transmembrane segments (helical) span residues 40 to 60, 80 to 100, 150 to 170, 177 to 197, and 273 to 293; these read IMVF…PYLI, MLIL…QGKI, VLGN…GAVI, VILS…TQIV, and LGFA…IITV. Residues 355–589 enclose the ABC transporter domain; that stretch reads IEFKNVWFSY…RGFYYELFTS (235 aa). 388–395 contacts ATP; that stretch reads GPTGSGKT.

The protein belongs to the ABC transporter superfamily.

The protein resides in the cell membrane. This is an uncharacterized protein from Thermotoga maritima (strain ATCC 43589 / DSM 3109 / JCM 10099 / NBRC 100826 / MSB8).